The primary structure comprises 140 residues: Large ribosomal subunit protein uL11 (140 aa).

The protein belongs to the universal ribosomal protein uL11 family. As to quaternary structure, part of the ribosomal stalk of the 50S ribosomal subunit. Interacts with L10 and the large rRNA to form the base of the stalk. L10 forms an elongated spine to which L12 dimers bind in a sequential fashion forming a multimeric L10(L12)X complex. In terms of processing, one or more lysine residues are methylated.

Its function is as follows. Forms part of the ribosomal stalk which helps the ribosome interact with GTP-bound translation factors. In Nitratidesulfovibrio vulgaris (strain DSM 19637 / Miyazaki F) (Desulfovibrio vulgaris), this protein is Large ribosomal subunit protein uL11.